Consider the following 694-residue polypeptide: E3 ubiquitin-protein ligase SPL11 (694 aa).

Over residues 1 to 12 (MAGDRAEEEEGE) the composition is skewed to acidic residues. 2 disordered regions span residues 1-21 (MAGD…ARAA) and 343-363 (NGME…ACSS). The U-box domain maps to 272–346 (TIPDEFRCPI…SQWCETNGME (75 aa)). Residues 350–363 (RSTQPNKPTPACSS) show a composition bias toward polar residues. ARM repeat units follow at residues 398–438 (NANN…NLSI), 439–479 (HEDN…SLSV), 480–520 (IDEY…NLCI), 521–561 (YQGN…ILSS), 562–602 (HPEG…HLCS), and 603–650 (GEHH…FLVQ). Positions 650–667 (QQQEEQESQSQASAQVPP) are enriched in low complexity. The segment at 650–694 (QQQEEQESQSQASAQVPPQATPEQVPENDIPEQLDSPASQYPMVV) is disordered.

Interacts with SPIN1 (via N-terminus). Highly expressed in leaf, at intermediate levels in shoot and weakly in root.

It is found in the nucleus. Its subcellular location is the cytoplasm. It carries out the reaction S-ubiquitinyl-[E2 ubiquitin-conjugating enzyme]-L-cysteine + [acceptor protein]-L-lysine = [E2 ubiquitin-conjugating enzyme]-L-cysteine + N(6)-ubiquitinyl-[acceptor protein]-L-lysine.. It functions in the pathway protein modification; protein ubiquitination. Its function is as follows. E3 ubiquitin-protein ligase that negatively regulates programmed cell death and disease resistance. Participates in flowering time control by mediating ubiquitination and subsequent proteasomal degradation of SPIN1. The polypeptide is E3 ubiquitin-protein ligase SPL11 (SPL11) (Oryza sativa subsp. japonica (Rice)).